Here is a 339-residue protein sequence, read N- to C-terminus: MIFIDACFRKETPYTPIWMMRQAGRYLSEYQESRKKAGSFLELCKNSDLATEVTLQPVEILGVDAAILFSDILVVPLEMGLNLEFIPKKGPHFLETITDLKSVESLKVGAYKQLNYVYDTISQTRQKLSREKALIGFCGSPWTLATYMIEGEGSKSYAKSKKMLYSEPEVLKALLEKLSLELIEYLSLQIQAGVNAVMIFDSWASALEKEAYLKFSWDYLKKISKELKKRYAHIPVILFPKGIGAYLDSIDGEFDVFGVDWGTPLTAAKKILGGKYVLQGNLEPTRLYDKNALEEGVETILKVMGNQGHIFNLGHGMLPDLPRENAKYLVQLVHAKTRR.

Substrate contacts are provided by residues 21–25, Phe40, Asp71, Tyr147, Ser202, and His315; that span reads RQAGR.

The protein belongs to the uroporphyrinogen decarboxylase family. As to quaternary structure, homodimer.

It is found in the cytoplasm. It carries out the reaction uroporphyrinogen III + 4 H(+) = coproporphyrinogen III + 4 CO2. Its pathway is porphyrin-containing compound metabolism; protoporphyrin-IX biosynthesis; coproporphyrinogen-III from 5-aminolevulinate: step 4/4. Functionally, catalyzes the decarboxylation of four acetate groups of uroporphyrinogen-III to yield coproporphyrinogen-III. The sequence is that of Uroporphyrinogen decarboxylase from Helicobacter pylori (strain ATCC 700392 / 26695) (Campylobacter pylori).